The following is a 488-amino-acid chain: Acetyl-coenzyme A carboxylase carboxyl transferase subunit beta, chloroplastic (488 aa).

Residues Leu-227 to Asn-488 enclose the CoA carboxyltransferase N-terminal domain. Positions 231, 234, 247, and 250 each coordinate Zn(2+). A C4-type zinc finger spans residues Cys-231–Cys-250.

The protein belongs to the AccD/PCCB family. In terms of assembly, acetyl-CoA carboxylase is a heterohexamer composed of biotin carboxyl carrier protein, biotin carboxylase and 2 subunits each of ACCase subunit alpha and ACCase plastid-coded subunit beta (accD). Requires Zn(2+) as cofactor. As to expression, accumulates in fatty acids synthesizing tissues such as embryos, expanding leaves, flower buds, flowers, and developing siliques.

It is found in the plastid. The protein localises to the chloroplast membrane. The protein resides in the chloroplast stroma. It catalyses the reaction N(6)-carboxybiotinyl-L-lysyl-[protein] + acetyl-CoA = N(6)-biotinyl-L-lysyl-[protein] + malonyl-CoA. It participates in lipid metabolism; malonyl-CoA biosynthesis; malonyl-CoA from acetyl-CoA: step 1/1. Its function is as follows. Component of the acetyl coenzyme A carboxylase (ACC) complex. Biotin carboxylase (BC) catalyzes the carboxylation of biotin on its carrier protein (BCCP) and then the CO(2) group is transferred by the transcarboxylase to acetyl-CoA to form malonyl-CoA. This chain is Acetyl-coenzyme A carboxylase carboxyl transferase subunit beta, chloroplastic, found in Arabidopsis thaliana (Mouse-ear cress).